Here is a 557-residue protein sequence, read N- to C-terminus: Resveratrol cleavage oxygenase 1 (557 aa).

Positions 1 to 46 (MAILNDPPSSTTILSLHTPDVPPPSKPTPATTSHPQDSRNPRNLTS) are disordered. Piceatannol-binding residues include Tyr-144 and Lys-177. Trans-resveratrol is bound by residues Tyr-144 and Lys-177. Fe cation-binding residues include His-211, His-262, and His-334. Glu-404 contacts piceatannol. Residue Glu-404 participates in trans-resveratrol binding. Fe cation is bound at residue His-523.

Belongs to the carotenoid oxygenase family. Fe(2+) is required as a cofactor.

It carries out the reaction trans-resveratrol + O2 = 3,5-dihydroxybenzaldehyde + 4-hydroxybenzaldehyde. The enzyme catalyses piceatannol + O2 = 3,5-dihydroxybenzaldehyde + 3,4-dihydroxybenzaldehyde. Its function is as follows. Dioxygenase that cleaves the interphenyl C-alpha-C-beta double bond of resveratrol to yield 3,5-dihydroxybenzaldehyde and 4-hydroxybenzaldehyde. Also cleaves piceatannol, a compound that differs from resveratrol only in the occurrence of an additional hydroxyl group, which leads to the production of 3,4-dihydroxybenzaldehyde and 3,5-hydroxybenzaldehyde. The chain is Resveratrol cleavage oxygenase 1 from Botryotinia fuckeliana (strain B05.10) (Noble rot fungus).